The sequence spans 110 residues: Phosphoribosyl-ATP pyrophosphatase (110 aa).

Belongs to the PRA-PH family.

It is found in the cytoplasm. It carries out the reaction 1-(5-phospho-beta-D-ribosyl)-ATP + H2O = 1-(5-phospho-beta-D-ribosyl)-5'-AMP + diphosphate + H(+). It participates in amino-acid biosynthesis; L-histidine biosynthesis; L-histidine from 5-phospho-alpha-D-ribose 1-diphosphate: step 2/9. This is Phosphoribosyl-ATP pyrophosphatase from Teredinibacter turnerae (strain ATCC 39867 / T7901).